Reading from the N-terminus, the 100-residue chain is U-myrmeciitoxin(01)-Mg7b (100 aa).

Positions 1-17 (MKLSCLSLALAIILVLA) are cleaved as a signal peptide. A propeptide spanning residues 18-50 (IVYSPHMEVKALADAEPDAIGFADAFGEADAEP) is cleaved from the precursor. Ser-85 carries O-linked (GalNAc...) serine glycosylation. 2 O-linked (GalNAc...) threonine glycosylation sites follow: Thr-94 and Thr-95.

It belongs to the formicidae venom precursor-01 superfamily. In terms of processing, glycosylation is critical to maintaining the aqueous solubility of this protein, but does not directly contribute to its activity. In terms of tissue distribution, expressed by the venom gland.

The protein localises to the secreted. It localises to the target cell membrane. In terms of biological role, neurotoxin that triggers pain behavior and inflammation in mammals, and is paralytic and lethal to insects. Causes a time-dependent increase in cell leak current. May act by targeting membranes. This is U-myrmeciitoxin(01)-Mg7b from Myrmecia gulosa (Red bulldog ant).